Consider the following 531-residue polypeptide: Inactive beta-amylase 4, chloroplastic (531 aa).

Residues 1–62 (MTETGVIGCG…KRGRFITKLR (62 aa)) constitute a chloroplast transit peptide.

The protein belongs to the glycosyl hydrolase 14 family. Preferentially expressed in vascular tissue of cotyledons, leaves, petioles, stems, petals, siliques and roots, particularly in phloem. Also present in root tip.

It localises to the plastid. The protein localises to the chloroplast. Functionally, no alpha-1,4-glucan hydrolase activity, including beta-amylase, alpha-amylase, a-glucosidase or alpha-amyloglucosidase. However, facilitates or regulates starch breakdown, especially at night, by a mechanism involving direct interaction with starch or other alpha-1,4-glucan. The sequence is that of Inactive beta-amylase 4, chloroplastic (BAM4) from Arabidopsis thaliana (Mouse-ear cress).